A 94-amino-acid chain; its full sequence is Neutrophil defensin 6 (94 aa).

The N-terminal stretch at Met-1 to Ala-19 is a signal peptide. Positions Lys-20–Ala-61 are excised as a propeptide. 3 disulfides stabilise this stretch: Cys-65–Cys-93, Cys-67–Cys-82, and Cys-72–Cys-92.

The protein belongs to the alpha-defensin family.

The protein resides in the secreted. Its function is as follows. Defensins 6 and 7 have bacteriostatic activity against Gram-positive bacteria S.aureus and L.monocytogenes and Gram-negative bacterium E.coli and antifungal activity against C.neoformans. Defensin 7 has microbicidial activity against Gram-positive bacteria S.aureus and L.monocytogenes. This chain is Neutrophil defensin 6, found in Macaca mulatta (Rhesus macaque).